The primary structure comprises 185 residues: MNNTGLSVKKVVAIGIGSAIYVILARFTSIPTPIPNTNIELVFPFLAFFASIYGATVGFSVGFIGHALSDFIMYGQTWWSWVLATGILGWIIGLAYKRLDLKNGIFGLKQIILFNIVQIIANILAWIVVAPIGDIIIYSEPANKVFVQGISATISNGISILIIGTILLKAYASTKIKKGSLRKED.

5 helical membrane-spanning segments follow: residues Val-11–Pro-31, Phe-45–Gly-65, Ile-72–Ile-92, Ile-111–Pro-131, and Phe-146–Ile-166.

This sequence belongs to the UPF0397 family.

The protein localises to the cell membrane. The sequence is that of UPF0397 protein LBA0922 from Lactobacillus acidophilus (strain ATCC 700396 / NCK56 / N2 / NCFM).